Reading from the N-terminus, the 205-residue chain is Large ribosomal subunit protein uL3 (205 aa).

It belongs to the universal ribosomal protein uL3 family. As to quaternary structure, part of the 50S ribosomal subunit. Forms a cluster with proteins L14 and L19.

Functionally, one of the primary rRNA binding proteins, it binds directly near the 3'-end of the 23S rRNA, where it nucleates assembly of the 50S subunit. This chain is Large ribosomal subunit protein uL3, found in Flavobacterium johnsoniae (strain ATCC 17061 / DSM 2064 / JCM 8514 / BCRC 14874 / CCUG 350202 / NBRC 14942 / NCIMB 11054 / UW101) (Cytophaga johnsonae).